The chain runs to 579 residues: Glutamine--tRNA ligase (579 aa).

Residues 41–51 (PEPNGYLHIGH) carry the 'HIGH' region motif. ATP-binding positions include 42–44 (EPN) and 48–54 (HIGHAKA). Residues aspartate 74 and tyrosine 218 each contribute to the L-glutamine site. Residues threonine 237, 285–286 (RL), and 293–295 (MSK) each bind ATP. The 'KMSKS' region signature appears at 292–296 (VMSKR).

The protein belongs to the class-I aminoacyl-tRNA synthetase family. Monomer.

It localises to the cytoplasm. It carries out the reaction tRNA(Gln) + L-glutamine + ATP = L-glutaminyl-tRNA(Gln) + AMP + diphosphate. The sequence is that of Glutamine--tRNA ligase from Xanthomonas euvesicatoria pv. vesicatoria (strain 85-10) (Xanthomonas campestris pv. vesicatoria).